We begin with the raw amino-acid sequence, 389 residues long: Probable L-tyrosine/L-aspartate decarboxylase (389 aa).

K233 is subject to N6-(pyridoxal phosphate)lysine.

The protein belongs to the group II decarboxylase family. MfnA subfamily. The cofactor is pyridoxal 5'-phosphate.

The catalysed reaction is L-tyrosine + H(+) = tyramine + CO2. It carries out the reaction L-aspartate + H(+) = beta-alanine + CO2. It functions in the pathway cofactor biosynthesis; methanofuran biosynthesis. It participates in cofactor biosynthesis; coenzyme A biosynthesis. Functionally, catalyzes the decarboxylation of L-tyrosine to produce tyramine for methanofuran biosynthesis. Can also catalyze the decarboxylation of L-aspartate to produce beta-alanine for coenzyme A (CoA) biosynthesis. This is Probable L-tyrosine/L-aspartate decarboxylase from Methanosphaera stadtmanae (strain ATCC 43021 / DSM 3091 / JCM 11832 / MCB-3).